The sequence spans 356 residues: Guanine nucleotide-binding protein alpha-17 subunit (356 aa).

G2 carries N-myristoyl glycine lipidation. C4 carries the S-palmitoyl cysteine lipid modification. The G-alpha domain maps to 32-356 (SIVKLLLLGA…QKNLQKAGMM (325 aa)). A G1 motif region spans residues 35-48 (KLLLLGAGECGKST). Residues 40-47 (GAGECGKS), 177-183 (LYSRVAT), 202-206 (DVGGQ), 271-274 (NKKD), and A328 contribute to the GTP site. 2 residues coordinate Mg(2+): S47 and T183. Residues 175-183 (DILYSRVAT) are G2 motif. The tract at residues 198–207 (FRVFDVGGQR) is G3 motif. The tract at residues 267 to 274 (ILFMNKKD) is G4 motif. Positions 326–331 (TCATDT) are G5 motif.

It belongs to the G-alpha family. As to quaternary structure, g proteins are composed of 3 units; alpha, beta and gamma. The alpha chain contains the guanine nucleotide binding site. Expressed in sensory neurons in the head and tail. Expressed in amphid AWC neurons, to a lesser extent in AWB and weakly in AWA, ASH and ADF neurons (head sensory neurons). Expressed in phasmid PHA and PHB neurons (tail sensory neurons).

The protein localises to the cell projection. It is found in the cilium. It localises to the dendrite. Its function is as follows. Guanine nucleotide-binding proteins (G proteins) are involved as modulators or transducers in various transmembrane signaling systems. This specific G-alpha subunit plays an important role in olfaction and in cilia morphogenesis. Involved in chemotactic responses to attractants diacetyl, pyrazine, 2,4,5-trimethylthiazole, benzaldehyde, isoamyl alcohol, butanone and 2,3-pentanedione. Displays a redundant function with gpa-3 in chemotactic responses. Plays a role in the avoidance response to the noxious chemical quinine in ASH sensory neurons. Involved in avoidance responses to copper, sodium dodecyl sulfate and linoleic acid. Involved in osmotic avoidance and mechanosensory responses. Involved in specifying fan-like morphology of cilia of head sensory neurons AWC. Plays a role in the detection of preferred food sources by mediating the recognition of food odors in olfactory sensory neurons. The polypeptide is Guanine nucleotide-binding protein alpha-17 subunit (Caenorhabditis elegans).